The primary structure comprises 138 residues: Large ribosomal subunit protein bL19 (138 aa).

It belongs to the bacterial ribosomal protein bL19 family.

Functionally, this protein is located at the 30S-50S ribosomal subunit interface and may play a role in the structure and function of the aminoacyl-tRNA binding site. The chain is Large ribosomal subunit protein bL19 (rplS) from Rickettsia prowazekii (strain Madrid E).